A 465-amino-acid chain; its full sequence is Glutamate--tRNA ligase (465 aa).

Residues 11-21 carry the 'HIGH' region motif; the sequence is PSPTGFIHLGN. Basic and acidic residues predominate over residues 120–131; sequence KPRYDGTWRPEP. Residues 120–139 form a disordered region; it reads KPRYDGTWRPEPGKVLPTPP. Residues 243 to 247 carry the 'KMSKS' region motif; it reads KMSKR. Residue lysine 246 coordinates ATP.

It belongs to the class-I aminoacyl-tRNA synthetase family. Glutamate--tRNA ligase type 1 subfamily. Monomer.

The protein resides in the cytoplasm. The catalysed reaction is tRNA(Glu) + L-glutamate + ATP = L-glutamyl-tRNA(Glu) + AMP + diphosphate. Catalyzes the attachment of glutamate to tRNA(Glu) in a two-step reaction: glutamate is first activated by ATP to form Glu-AMP and then transferred to the acceptor end of tRNA(Glu). This is Glutamate--tRNA ligase from Ralstonia nicotianae (strain ATCC BAA-1114 / GMI1000) (Ralstonia solanacearum).